The sequence spans 257 residues: Snake venom serine protease 2C (257 aa).

The N-terminal stretch at 1 to 18 (MVLIRVLANLLILQLSYA) is a signal peptide. A propeptide spanning residues 19 to 24 (QKSSEL) is cleaved from the precursor. Residues 25–248 (VIGGHPCNIN…HLDWIKSIIA (224 aa)) form the Peptidase S1 domain. Intrachain disulfides connect Cys31-Cys162, Cys49-Cys65, Cys97-Cys255, Cys141-Cys209, Cys173-Cys188, and Cys199-Cys224. Residues His64 and Asp109 each act as charge relay system in the active site. N-linked (GlcNAc...) asparagine glycosylation is found at Asn116, Asn120, and Asn121. Ser203 serves as the catalytic Charge relay system.

The protein belongs to the peptidase S1 family. Snake venom subfamily. In terms of assembly, monomer. In terms of tissue distribution, expressed by the venom gland.

Its subcellular location is the secreted. Its function is as follows. Snake venom serine protease that may act in the hemostasis system of the prey. This Craspedocephalus gramineus (Bamboo pit viper) protein is Snake venom serine protease 2C (TLG2C).